The following is a 543-amino-acid chain: T-complex protein 1 subunit eta (543 aa).

M1 is modified (N-acetylmethionine). ADP is bound at residue G41. G41 provides a ligand contact to ATP. Residue K67 is modified to N6-acetyllysine. Position 92 (D92) interacts with Mg(2+). Residues G93, T94, T95, S96, S164, and S165 each coordinate ADP. Residue G93 coordinates ATP. ATP is bound at residue S96. K250 and K320 each carry N6-acetyllysine. Positions 398 and 409 each coordinate ATP. An ADP-binding site is contributed by G409. K430 participates in a covalent cross-link: Glycyl lysine isopeptide (Lys-Gly) (interchain with G-Cter in SUMO2). Positions 494 and 499 each coordinate ADP. R499 serves as a coordination point for ATP. The tract at residues 524 to 543 is disordered; that stretch reads RSTVDAPTAAGRGRGRGRPH. At R535 the chain carries Omega-N-methylarginine.

Belongs to the TCP-1 chaperonin family. Component of the chaperonin-containing T-complex (TRiC), a hexadecamer composed of two identical back-to-back stacked rings enclosing a protein folding chamber. Each ring is made up of eight different subunits: TCP1/CCT1, CCT2, CCT3, CCT4, CCT5, CCT6A/CCT6, CCT7, CCT8. Interacts with PACRG. Interacts with DLEC1.

The protein localises to the cytoplasm. The enzyme catalyses ATP + H2O = ADP + phosphate + H(+). Functionally, component of the chaperonin-containing T-complex (TRiC), a molecular chaperone complex that assists the folding of actin, tubulin and other proteins upon ATP hydrolysis. The TRiC complex mediates the folding of WRAP53/TCAB1, thereby regulating telomere maintenance. In Homo sapiens (Human), this protein is T-complex protein 1 subunit eta (CCT7).